Reading from the N-terminus, the 487-residue chain is NADH-quinone oxidoreductase subunit N (487 aa).

The next 14 helical transmembrane spans lie at 8–28, 35–55, 78–98, 104–124, 125–145, 159–179, 203–223, 235–255, 271–291, 297–317, 328–348, 376–396, 409–428, and 451–471; these read LIAMLPLLIVGLTVVVVMLSI, FINATLTVIGLNLALLSLYFV, GLVIIASLATSTFAYPWLVGY, EFYLLVLIAALGGILLTSANH, LASLFLGIELLTLPLFGLIGY, YMLLSAAASSFLLFGMALLYA, ILAGLGMMIVGLGFKLSLVPF, PAPVSTFLATASKIAIFAVVM, LVLSIIAVASILFGNLMAISQ, LLGYSSIAHLGYLLIALVAVQ, IGVYLAGYLFSSLGAFGVVSL, AVMTVMMLSLAGIPMTLGFIG, LWWLTGAVVLGSAIGLYYYL, and ALTAGGVVVLISAILVLVLGI.

This sequence belongs to the complex I subunit 2 family. In terms of assembly, NDH-1 is composed of 13 different subunits. Subunits NuoA, H, J, K, L, M, N constitute the membrane sector of the complex.

It is found in the cell inner membrane. It catalyses the reaction a quinone + NADH + 5 H(+)(in) = a quinol + NAD(+) + 4 H(+)(out). In terms of biological role, NDH-1 shuttles electrons from NADH, via FMN and iron-sulfur (Fe-S) centers, to quinones in the respiratory chain. The immediate electron acceptor for the enzyme in this species is believed to be ubiquinone. Couples the redox reaction to proton translocation (for every two electrons transferred, four hydrogen ions are translocated across the cytoplasmic membrane), and thus conserves the redox energy in a proton gradient. The sequence is that of NADH-quinone oxidoreductase subunit N from Yersinia pestis bv. Antiqua (strain Angola).